We begin with the raw amino-acid sequence, 295 residues long: MTIKAPTLNVPGLGVDPLTQRIKEKEKKWKYKIAVLSGKGGVGKSTVAVNLTAALAKMGYFVGILDADIHGPNVAKMFGIGNTDIYAEKFEDGHFEMIPPTVDFMGQVTPIKVMSMGMMVPEDQPIIWRGSLVTKAIKQLLGDVMWGELDFMIIDFPPGTGDEILTVVQSIQLDAAIVVTTPQEVALLDTGKAVNMMKKMEVPYIAVIENMSYLICPHCGNKIDIFGEGGGEKLAEKEGVDFLGKVPIDLKAREASDLGIPIVLYGDTPAAKAFMEIAEKLVNKLKEIKGDGREK.

38 to 45 (GKGGVGKS) is a binding site for ATP.

Belongs to the Mrp/NBP35 ATP-binding proteins family. In terms of assembly, homodimer.

In terms of biological role, binds and transfers iron-sulfur (Fe-S) clusters to target apoproteins. Can hydrolyze ATP. The protein is Iron-sulfur cluster carrier protein of Pyrococcus furiosus (strain ATCC 43587 / DSM 3638 / JCM 8422 / Vc1).